A 578-amino-acid chain; its full sequence is Protein O-linked-mannose beta-1,4-N-acetylglucosaminyltransferase 2 (578 aa).

Residues 1–4 are Cytoplasmic-facing; the sequence is MNLP. The chain crosses the membrane as a helical; Signal-anchor for type II membrane protein span at residues 5-25; the sequence is AVLNGLLVSVVAALLWKYVRL. The Lumenal portion of the chain corresponds to 26 to 578; that stretch reads VEHTSQLEEE…PFADVLICKT (553 aa). N-linked (GlcNAc...) asparagine glycosylation is found at asparagine 98, asparagine 275, and asparagine 541. Residues 482 to 578 form the Fibronectin type-III domain; sequence RVREPKCQTS…PFADVLICKT (97 aa).

The protein belongs to the glycosyltransferase 61 family.

It is found in the endoplasmic reticulum membrane. It carries out the reaction 3-O-(alpha-D-mannosyl)-L-threonyl-[protein] + UDP-N-acetyl-alpha-D-glucosamine = 3-O-(N-acetyl-beta-D-glucosaminyl-(1-&gt;4)-alpha-D-mannosyl)-L-threonyl-[protein] + UDP + H(+). It participates in protein modification; protein glycosylation. Its function is as follows. O-linked mannose beta-1,4-N-acetylglucosaminyltransferase that transfers UDP-N-acetyl-D-glucosamine to the 4-position of the mannose to generate N-acetyl-D-glucosamine-beta-1,4-O-D-mannosylprotein. Involved in the biosynthesis of the phosphorylated O-mannosyl trisaccharide (N-acetylgalactosamine-beta-3-N-acetylglucosamine-beta-4-(phosphate-6-)mannose), a carbohydrate structure present in alpha-dystroglycan (DAG1), which is required for binding laminin G-like domain-containing extracellular proteins with high affinity. The chain is Protein O-linked-mannose beta-1,4-N-acetylglucosaminyltransferase 2 (pomgnt2) from Danio rerio (Zebrafish).